The chain runs to 509 residues: Monofunctional riboflavin biosynthesis protein RIBA 3, chloroplastic (509 aa).

A chloroplast-targeting transit peptide spans 1-43; sequence MMDSALYHPRIFFAHSFINGLYSSPRFANTCWRLVSRSSWEIK. Residues 44–302 are inactive DHBP synthase; that stretch reads ASENSDRNVF…LTDLIRYRRK (259 aa). Residues 125–126 and 240–244 contribute to the D-ribulose 5-phosphate site; these read GD and RAGHT. Residues 303-509 are GTP cyclohydrolase II; that stretch reads RDKLVERITV…ISDNNDQPLA (207 aa). 353 to 357 serves as a coordination point for GTP; that stretch reads RVHSE. Cysteine 358, cysteine 369, and cysteine 371 together coordinate Zn(2+). GTP contacts are provided by residues glutamine 374, 397–399, and threonine 419; that span reads EGR. The active-site Proton acceptor; for GTP cyclohydrolase activity is aspartate 431. Arginine 433 functions as the Nucleophile; for GTP cyclohydrolase activity in the catalytic mechanism. GTP is bound by residues threonine 454 and lysine 459.

In the N-terminal section; belongs to the DHBP synthase family. This sequence in the C-terminal section; belongs to the GTP cyclohydrolase II family. Zn(2+) is required as a cofactor. Expressed in leaves, shoots, roots, flowers and siliques.

The protein resides in the plastid. It localises to the chloroplast. It carries out the reaction GTP + 4 H2O = 2,5-diamino-6-hydroxy-4-(5-phosphoribosylamino)-pyrimidine + formate + 2 phosphate + 3 H(+). It functions in the pathway cofactor biosynthesis; riboflavin biosynthesis; 5-amino-6-(D-ribitylamino)uracil from GTP: step 1/4. Functionally, involved in riboflavin biosynthesis. Catalyzes the conversion of GTP to 2,5-diamino-6-ribosylamino-4(3H)-pyrimidinone 5'-phosphate (DARP), formate and pyrophosphate. RIBA2 and RIBA3 together are not able to complement the loss of function of RIBA1. This Arabidopsis thaliana (Mouse-ear cress) protein is Monofunctional riboflavin biosynthesis protein RIBA 3, chloroplastic (RIBA3).